A 498-amino-acid chain; its full sequence is Signal recognition particle receptor FtsY (498 aa).

Disordered stretches follow at residues 1-130 (MGLF…PNQS) and 147-200 (KVES…YNRS). A compositionally biased stretch (low complexity) spans 36–46 (ALLAETAETAE). A compositionally biased stretch (polar residues) spans 103–120 (SENSVAAVQNNTETMPSQ). Residues 301–308 (GVNGVGKT), 383–387 (DTAGR), and 447–450 (TKID) each bind GTP.

It belongs to the GTP-binding SRP family. FtsY subfamily. In terms of assembly, part of the signal recognition particle protein translocation system, which is composed of SRP and FtsY.

It is found in the cell membrane. It localises to the cytoplasm. The enzyme catalyses GTP + H2O = GDP + phosphate + H(+). Involved in targeting and insertion of nascent membrane proteins into the cytoplasmic membrane. Acts as a receptor for the complex formed by the signal recognition particle (SRP) and the ribosome-nascent chain (RNC). This chain is Signal recognition particle receptor FtsY, found in Streptococcus mutans serotype c (strain ATCC 700610 / UA159).